We begin with the raw amino-acid sequence, 377 residues long: MLRALKTHAEAPIVVATRAASTNAEKLEEIRERLAKGPNFHDFVQNPDNTRNEWEQYDGKLRREKGEEQRLRLPPWLKTTIPVGKNYAKIKAQMRELKLSTVCEEARCPNIGECWGGGEHGTQTATIMLMGDTCTRGCRFCSVKTARKPPPLDVNEPVNTATAIASWGLDYIVLTSVDRDDLPDGGSEHIAETVREIKARNSNIFVECLVPDFRGNLECVKTIANSGLDVYAHNIETVEKLTPYVRDRRAHYRQTLQVLTEAKRFNPNLITKSSIMLGLGETDEEIENTLKDLREAGVDCVTLGQYMQPTNKHLKVIEYVTPEKFKHWEERGNELGFLYTASGPLVRSSYKAGEFFITSILENRKKRQNDTEVPKKQ.

7 residues coordinate [4Fe-4S] cluster: cysteine 103, cysteine 108, cysteine 114, cysteine 134, cysteine 138, cysteine 141, and serine 349. A Radical SAM core domain is found at 119-338 (EHGTQTATIM…EERGNELGFL (220 aa)).

Belongs to the radical SAM superfamily. Lipoyl synthase family. [4Fe-4S] cluster is required as a cofactor.

The protein localises to the mitochondrion. The catalysed reaction is [[Fe-S] cluster scaffold protein carrying a second [4Fe-4S](2+) cluster] + N(6)-octanoyl-L-lysyl-[protein] + 2 oxidized [2Fe-2S]-[ferredoxin] + 2 S-adenosyl-L-methionine + 4 H(+) = [[Fe-S] cluster scaffold protein] + N(6)-[(R)-dihydrolipoyl]-L-lysyl-[protein] + 4 Fe(3+) + 2 hydrogen sulfide + 2 5'-deoxyadenosine + 2 L-methionine + 2 reduced [2Fe-2S]-[ferredoxin]. Its pathway is protein modification; protein lipoylation via endogenous pathway; protein N(6)-(lipoyl)lysine from octanoyl-[acyl-carrier-protein]: step 2/2. Its function is as follows. Catalyzes the radical-mediated insertion of two sulfur atoms into the C-6 and C-8 positions of the octanoyl moiety bound to the lipoyl domains of lipoate-dependent enzymes, thereby converting the octanoylated domains into lipoylated derivatives. The sequence is that of Lipoyl synthase, mitochondrial from Drosophila melanogaster (Fruit fly).